The primary structure comprises 119 residues: Large ribosomal subunit protein bL20 (119 aa).

This sequence belongs to the bacterial ribosomal protein bL20 family.

In terms of biological role, binds directly to 23S ribosomal RNA and is necessary for the in vitro assembly process of the 50S ribosomal subunit. It is not involved in the protein synthesizing functions of that subunit. The protein is Large ribosomal subunit protein bL20 of Erythrobacter litoralis (strain HTCC2594).